Consider the following 418-residue polypeptide: D-amino acid dehydrogenase (418 aa).

3 to 17 (VTILGAGVVGVTSAW) serves as a coordination point for FAD.

The protein belongs to the DadA oxidoreductase family. The cofactor is FAD.

The catalysed reaction is a D-alpha-amino acid + A + H2O = a 2-oxocarboxylate + AH2 + NH4(+). The protein operates within amino-acid degradation; D-alanine degradation; NH(3) and pyruvate from D-alanine: step 1/1. Oxidative deamination of D-amino acids. In Agrobacterium fabrum (strain C58 / ATCC 33970) (Agrobacterium tumefaciens (strain C58)), this protein is D-amino acid dehydrogenase.